The following is a 35-amino-acid chain: Turgencin-B (35 aa).

Methionine sulfoxide is present on residues methionine 5 and methionine 9. Cystine bridges form between cysteine 7–cysteine 31, cysteine 11–cysteine 27, and cysteine 16–cysteine 24. Glycine 35 bears the Glycine amide mark.

Oxidation likely reduces antimicrobial activity against Gram-positive bacteria and Gram-negative bacteria.

The protein resides in the secreted. Has antimicrobial activity against Gram-positive bacteria (C.glutamicum ATCC 13032 (MIC=1.6 uM) and B.subtilis ATCC 23857 (MIC=1.6 uM)) and Gram-negative bacteria (E.coli ATCC 25922 (MIC=12.5 uM) and P.aeruginosa ATCC 27853 (MIC=25.0 uM)). Displays very low activity against the Gram-positive bacteria S.aureus ATCC 9144 (MIC&gt;100 uM). This is Turgencin-B from Synoicum turgens (Colonial ascidian).